A 307-amino-acid chain; its full sequence is MVVYKQLDEWIEHLMQCKPLPEENVKELVAKAREVFSNEKNVQPVKMPVTVCGDIHGQFHDMVELFKIGGTCPDTNYLFMGDYVDRGYNSVETVTLLVSLKVRYPERITILRGNHESRQITQVYGFYDECLRKYGNANVWQLFTDLFDFLPLTGLIENEVFCLHGGLSPALDTLDQIRELDRIQEVPHEGPMCDLLWSDPDERLGWGISPRGAGYTFGQDISEQFNVRNSLKLVARAHQLVMEGYNWSHEKNVVTIFSAPNYCYRCGNMAAIMEVAEGMDKGFQQFEPAPRRGAEGEVNRRTPDYFL.

Mn(2+)-binding residues include D54, H56, D82, and N114. The Proton donor role is filled by H115. Residues H164 and H238 each contribute to the Mn(2+) site. A disordered region spans residues 286-307; that stretch reads FEPAPRRGAEGEVNRRTPDYFL. The span at 289 to 307 shows a compositional bias: basic and acidic residues; sequence APRRGAEGEVNRRTPDYFL.

It belongs to the PPP phosphatase family. PP-2A subfamily. It depends on Mn(2+) as a cofactor.

It catalyses the reaction O-phospho-L-seryl-[protein] + H2O = L-seryl-[protein] + phosphate. The catalysed reaction is O-phospho-L-threonyl-[protein] + H2O = L-threonyl-[protein] + phosphate. The sequence is that of Serine/threonine-protein phosphatase PP2A-1 catalytic subunit from Acetabularia peniculus (Green alga).